We begin with the raw amino-acid sequence, 768 residues long: Protein STRUBBELIG (768 aa).

The N-terminal stretch at 1–24 (MSFTRWEVFFGLSVLALTMPFSAG) is a signal peptide. The Extracellular segment spans residues 25-341 (VTNLRDVSAI…GSGKFWSTQR (317 aa)). A disulfide bond links cysteine 57 and cysteine 66. N-linked (GlcNAc...) asparagine glycosylation occurs at asparagine 70. LRR repeat units follow at residues 94 to 115 (SIQVMDFSSNHISGTIPQALPS), 116 to 139 (SIRNLSLSSNRFTGNIPFTLSFLS), 140 to 162 (DLSELSLGSNLLSGEIPDYFQQL), 164 to 186 (KLTKLDLSSNILEGHLPSSMGDL), 188 to 210 (SLKILYLQDNKLTGTLDVIEDLF), and 211 to 231 (LTDLNVENNLFSGPIPPNLLK). A glycan (N-linked (GlcNAc...) asparagine) is linked at asparagine 119. The tract at residues 241–334 (PFNTSIITPP…ISPPSGSGSG (94 aa)) is disordered. Asparagine 243 carries an N-linked (GlcNAc...) asparagine glycan. Composition is skewed to pro residues over residues 248-283 (TPPPPPVVDPPPATHRAPPVPRIPPVSGVPPAPFAP) and 291-301 (QHPPPSPPLVW). Positions 315–334 (NSVSGQPTLQISPPSGSGSG) are enriched in polar residues. A helical transmembrane segment spans residues 342 to 362 (IILVVSSVAIIVLVSGLCVTL). Residues 363–768 (WRCCRSKIYN…EIVQDLQHMI (406 aa)) lie on the Cytoplasmic side of the membrane. The segment at 385–477 (PYFNKPPSQP…RAAHFPPGLN (93 aa)) is disordered. Positions 439–464 (SYYNKDVNTPQKPLQQPPRQFQSNDT) are enriched in polar residues. The 272-residue stretch at 497–768 (FSEENIIGEG…EIVQDLQHMI (272 aa)) folds into the Protein kinase domain. Residues 503–511 (IGEGSIGNV) and lysine 525 contribute to the ATP site.

The protein belongs to the protein kinase superfamily. Ser/Thr protein kinase family. As to quaternary structure, interacts (via intra-cellular domain) with AN; this interaction is not required for correct subcellular localization and recycling of SUB. Binds to QKY and POQ at the plasma membrane. Binds to QKY at plasmodesmata (PD) in root epidermal cells to promote tissue morphogenesis. As to expression, expressed in leaves, stems, inflorescences, flower buds and developing root epidermis.

The protein localises to the cell membrane. The protein resides in the cell junction. It is found in the plasmodesma. With respect to regulation, regulated at the post-transcriptional level. Regulates the expression of transcription factors that define the cell fates. Acts in a non-cell-autonomous fashion, functions in a radial inside-out signaling process, and mediates cell morphogenesis and cell fate across clonally distinct cell layers in floral primordia, developing ovules, and root meristems. Seems to be required for the regulation of cell shape and the orientation of the mitotic division plane. Involved in root hair specification, in the formation of the outer integument and the shape of organs such as carpels and petals and is necessary for the shape and height of the stem. Non-functional SUB proteins are retained in the endoplasmic reticulum and degraded by endoplasmic reticulum-associated degradation (ERAD). Collaboratively with QKY and POQ, regulates cell growth anisotropy during gynoecium development, thus linking together cell-cell communication and cellular growth. Together with QKY, links RLK-dependent signal transduction and intercellular communication mediated by plasmodesmata (PD) to regulate tissue morphogenesis. The sequence is that of Protein STRUBBELIG from Arabidopsis thaliana (Mouse-ear cress).